Reading from the N-terminus, the 1131-residue chain is Topless-related protein 2 (1131 aa).

The LisH domain occupies 4 to 36; the sequence is LSRELVFLILQFLDEEKFKESVHKLEQESGFFF. The CTLH domain occupies 34–92; that stretch reads FFFNIKYFEEKALAGEWDEVEKYLSGFTKVDDNRYSMKIFFEIRKQKYLEALDRNDRAK. A Phosphothreonine modification is found at threonine 214. WD repeat units follow at residues 345–385, 407–446, 451–493, 495–535, 585–624, 629–668, 763–802, 829–867, 870–910, 913–952, 959–999, and 1005–1044; these read RQGS…KVVT, EPSI…LRQH, AHVG…FTFE, HEAP…SRVD, FRKK…LLTV, GGLP…RTLR, DSVS…QNPT, NPEG…VMTT, PPPP…VKTK, GHQK…KKKS, PGKA…CIHK, and ALSS…LRCR. The interval 1099–1131 is disordered; sequence VGVAAGSDKAGTENGRPSSSSAANNSSSDQIQR. The span at 1116–1131 shows a compositional bias: low complexity; it reads SSSSAANNSSSDQIQR.

As to quaternary structure, tetramer. Interacts with NINJA/AFPH2. Interacts with SMXL6, SMXL7 and SMXL8. Interacts with SPL (via EAR motif). Interacts with SPEAR3/TIE1.

The protein localises to the nucleus. Its function is as follows. Transcriptional corepressor. Negative regulator of jasmonate responses. The sequence is that of Topless-related protein 2 (TPR2) from Arabidopsis thaliana (Mouse-ear cress).